The primary structure comprises 779 residues: Membrane metallo-endopeptidase-like 1 (779 aa).

Topologically, residues 1–27 (MGKSEGPVGMVESAGRAGQKRPGFLEG) are cytoplasmic. Residues 28 to 48 (GLLLLLLLVTAALVALGVLYA) form a helical; Signal-anchor for type II membrane protein membrane-spanning segment. At 49–779 (DRRGKQLPRL…MHPKERCRVW (731 aa)) the chain is on the lumenal side. The Peptidase M13 domain maps to 88-779 (VCTTPGCVIA…MHPKERCRVW (692 aa)). 5 cysteine pairs are disulfide-bonded: Cys89–Cys94, Cys112–Cys764, Cys120–Cys724, Cys175–Cys439, and Cys650–Cys776. Arg135 is a binding site for a peptide. 4 N-linked (GlcNAc...) asparagine glycosylation sites follow: Asn177, Asn207, Asn350, and Asn530. Residues 515–560 (LEEMNRRLDEEYSNLNFSEDLYFENSLQNLKVGAQRSLRKLREKVD) adopt a coiled-coil conformation. His613 provides a ligand contact to Zn(2+). Glu614 is a catalytic residue. His617 lines the Zn(2+) pocket. The N-linked (GlcNAc...) asparagine glycan is linked to Asn657. Position 676 (Glu676) interacts with Zn(2+). The active-site Proton donor is the Asp680.

It belongs to the peptidase M13 family. The cofactor is Zn(2+). N-glycosylated. As to expression, predominantly expressed in testis. Weakly expressed in brain, kidney and heart.

Its subcellular location is the membrane. The protein resides in the secreted. It carries out the reaction Preferential cleavage of polypeptides between hydrophobic residues, particularly with Phe or Tyr at P1'.. Its activity is regulated as follows. Inhibited by thiorphan and phosphoramidon. Functionally, metalloprotease involved in sperm function, possibly by modulating the processes of fertilization and early embryonic development. Degrades a broad variety of small peptides with a preference for peptides shorter than 3 kDa containing neutral bulky aliphatic or aromatic amino acid residues. Shares the same substrate specificity with MME and cleaves peptides at the same amide bond. The protein is Membrane metallo-endopeptidase-like 1 (MMEL1) of Homo sapiens (Human).